Reading from the N-terminus, the 549-residue chain is MSRVVRAPRGTELHCKNWQIEAPYRMIMNNLDPEVAEDPANLIVYGGAGKAARNWEAFDKILESLENLEEDETLLVQSGKPVGIFKTHEMAPRVLISNAMLVPKWANWETFWDLEAKGLTMYGQMTAGSWIYIGSQGIVEGTFETFAALAKKHFDGSLKGKFVLSAGLGGMGGAQPLAITMLDGACLIVEVDRNRIKRRLETKYLDVMAEDLDEALGMVMKAKEEGRALSVGLVGNAADVHPELVRRGIIPDVVTDQTSAHDPLNGYVPNGMTLDEAIALRKSNPEEYIKRAKKAMAEHVLAMLEMQKRGAIVFDYGNNIRRMAYDEGVKDAFNIPSYVPEYIRDLFCEGKGPFRWVALSGDPEDIYKTDQKVLELFPDDPILNRWIRLARERVKFQGLPARICWLGYGQRAEFGLAINEMVRKGELKAPIVIGRDHHDTGSVASPYRETEAMKDGSDAIADWPILNALLNTASGATWVSVHHGGGVGIGYSIHAGVVVCADGTKETDLRIERVLTGDPGLGIVRHADAGYEIAIKTAKEKGIKMPMLK.

NAD(+) is bound by residues Gly-46–Gly-47, Gln-124, Gly-170–Gly-172, Glu-190, Arg-195, Asn-236–Ala-237, Gln-257–His-261, Tyr-267–Val-268, and Tyr-316. The active site involves Cys-404. Gly-486 contacts NAD(+).

Belongs to the urocanase family. It depends on NAD(+) as a cofactor.

The protein resides in the cytoplasm. It catalyses the reaction 4-imidazolone-5-propanoate = trans-urocanate + H2O. Its pathway is amino-acid degradation; L-histidine degradation into L-glutamate; N-formimidoyl-L-glutamate from L-histidine: step 2/3. Catalyzes the conversion of urocanate to 4-imidazolone-5-propionate. This chain is Urocanate hydratase, found in Caldanaerobacter subterraneus subsp. tengcongensis (strain DSM 15242 / JCM 11007 / NBRC 100824 / MB4) (Thermoanaerobacter tengcongensis).